The primary structure comprises 701 residues: Coiled-coil domain-containing protein 62 (701 aa).

Coiled coils occupy residues 61–197 (ETST…LQAR) and 241–342 (TCVV…QFLN). The disordered stretch occupies residues 624–652 (KSAEREEESAALPDRRTSANEKDDFSPTS). Basic and acidic residues predominate over residues 636–648 (PDRRTSANEKDDF). 2 consecutive short sequence motifs (LXXLL motif) follow at residues 654–658 (LQRLL) and 670–674 (LSTLL).

Interacts with ESR1 and ESR2 in the presence of estradiol/E2. The interaction with ESR2 recruits CCDC62 to ER target genes, including cyclin-D1/CCND1 AP-1 promoter. Interacts with GOPC. Highly expressed in testis, not detected in other tissues (at protein level). Expressed at low levels in the epididymis, lung, spleen, bladder, kidney, liver, muscle.

The protein resides in the cytoplasm. Its subcellular location is the nucleus. The protein localises to the cytoplasmic vesicle. It is found in the secretory vesicle. It localises to the acrosome. Functionally, nuclear receptor coactivator that can enhance preferentially estrogen receptors ESR1 and ESR2 transactivation. Also modulates progesterone/PGR, glucocorticoid/NR3C1 and androgen/AR receptors transactivation, although at lower level; little effect on vitamin D receptor/VDR. Required for normal spermiogenesis. It probably plays a role in acrosome formation. The sequence is that of Coiled-coil domain-containing protein 62 (Ccdc62) from Mus musculus (Mouse).